Reading from the N-terminus, the 486-residue chain is tRNA (uracil-5-)-methyltransferase homolog B (486 aa).

Residues Gln-305, Glu-355, and Asn-405 each contribute to the S-adenosyl-L-methionine site. The active-site Nucleophile is Cys-433. Glu-479 (proton acceptor) is an active-site residue.

This sequence belongs to the class I-like SAM-binding methyltransferase superfamily. RNA M5U methyltransferase family.

It is found in the mitochondrion matrix. It carries out the reaction uridine(54) in tRNA + S-adenosyl-L-methionine = 5-methyluridine(54) in tRNA + S-adenosyl-L-homocysteine + H(+). The enzyme catalyses a uridine in 12S rRNA + S-adenosyl-L-methionine = a 5-methyluridine in 12S rRNA + S-adenosyl-L-homocysteine + H(+). In terms of biological role, mitochondrial S-adenosyl-L-methionine-dependent methyltransferase that catalyzes the formation of 5-methyl-uridine in tRNAs and 12S rRNA. Catalyzes the methylation of uridine at position 54 (m5U54) in all tRNAs. Specifically methylates the uridine in position 429 of 12S rRNA (m5U429). Does not affect RNA stability or mitochondrial translation. The polypeptide is tRNA (uracil-5-)-methyltransferase homolog B (TRMT2B) (Pongo abelii (Sumatran orangutan)).